The chain runs to 264 residues: uncharacterized protein (264 aa).

A signal peptide spans 1-22 (MGYLKKLALFISVIILGIFIIG). Residue C23 is the site of N-palmitoyl cysteine attachment. C23 is lipidated: S-diacylglycerol cysteine.

The protein belongs to the staphylococcal tandem lipoprotein family.

The protein resides in the cell membrane. This is an uncharacterized protein from Staphylococcus aureus (strain N315).